We begin with the raw amino-acid sequence, 433 residues long: DNA methyltransferase 1-associated protein 1 (433 aa).

Positions 1–204 are required for nuclear localization; sequence MSADVRDILD…EVVALLAKAK (204 aa). The Myb-like domain occupies 148 to 197; the sequence is NNWSKVQTDHLFDLARRFDLRFIVMADRWNRQQHGTKTVEELKERYYEVV. A coiled-coil region spans residues 186–281; sequence VEELKERYYE…ADQQNEHASN (96 aa). Over residues 252–264 the composition is skewed to basic and acidic residues; the sequence is EARKKERERKTQD. The disordered stretch occupies residues 252 to 305; sequence EARKKERERKTQDLQKLISQADQQNEHASNTPSTRKYEKKLHKKKVHQQPRPSR. Residues 268 to 285 are compositionally biased toward polar residues; it reads LISQADQQNEHASNTPST. Over residues 288-299 the composition is skewed to basic residues; the sequence is YEKKLHKKKVHQ.

As to quaternary structure, interacts with Rel. Interacts with akirin and Bap55.

It localises to the nucleus. The protein resides in the cytoplasm. Functionally, involved in transcription repression and activation. Required for larvae and pupal development, and for normal innate immune responses. Involved in modulating the activation of the immune deficiency pathway (Imd), acting either downstream of, or at the level of, the NF-kappa-B factor Rel. Possibly functions with akirin to regulate Rel, and its interaction with the Brahma complex protein Bap55 suggests that it may regulate the IMD pathway at the level of chromatin remodeling. This is DNA methyltransferase 1-associated protein 1 from Drosophila melanogaster (Fruit fly).